Reading from the N-terminus, the 354-residue chain is Peptide-N(4)-(N-acetyl-beta-D-glucosaminyl)asparagine amidase F (354 aa).

Positions Met1–Asn40 are cleaved as a signal peptide. An intrachain disulfide couples Cys91 to Cys96. Active-site residues include Asp100, Glu158, and Glu246. 2 cysteine pairs are disulfide-bonded: Cys244–Cys248 and Cys271–Cys292.

In terms of assembly, monomer.

The catalysed reaction is Hydrolysis of an N(4)-(acetyl-beta-D-glucosaminyl)asparagine residue in which the glucosamine residue may be further glycosylated, to yield a (substituted) N-acetyl-beta-D-glucosaminylamine and a peptide containing an aspartate residue.. Functionally, cleaves an entire glycan from a glycoprotein. Requires that the glycosylated asparagine moiety (reaction 1) be substituted on its amino (R1) and carboxyl (R2) terminus with a polypeptide chain. In Elizabethkingia miricola (Chryseobacterium miricola), this protein is Peptide-N(4)-(N-acetyl-beta-D-glucosaminyl)asparagine amidase F (ngl).